Reading from the N-terminus, the 282-residue chain is Homeobox protein vex1 (282 aa).

A DNA-binding region (homeobox) is located at residues 129-188; sequence ASRARTKFTAEQLEELEKSFKENRYIGSSEKRRLSKVLKLSENQIKTWFQNRRMKFKRQT.

The protein localises to the nucleus. Functionally, transcriptional repressor. Acts in a ventral signaling pathway downstream of bmp4 to antagonize the Spemann organizer and ventrally pattern the embryonic mesoderm. Represses transcription of the dorsal genes gsc and otx2. The sequence is that of Homeobox protein vex1 from Xenopus tropicalis (Western clawed frog).